Here is a 206-residue protein sequence, read N- to C-terminus: dITP/XTP pyrophosphatase (206 aa).

Residue 7–12 participates in substrate binding; sequence SSHGYK. D70 functions as the Proton acceptor in the catalytic mechanism. D70 is a binding site for Mg(2+). Residues T71, 154–157, K177, and 182–183 contribute to the substrate site; these read FGYD and HR.

It belongs to the HAM1 NTPase family. As to quaternary structure, homodimer. Mg(2+) serves as cofactor.

It catalyses the reaction XTP + H2O = XMP + diphosphate + H(+). The enzyme catalyses dITP + H2O = dIMP + diphosphate + H(+). The catalysed reaction is ITP + H2O = IMP + diphosphate + H(+). In terms of biological role, pyrophosphatase that catalyzes the hydrolysis of nucleoside triphosphates to their monophosphate derivatives, with a high preference for the non-canonical purine nucleotides XTP (xanthosine triphosphate), dITP (deoxyinosine triphosphate) and ITP. Seems to function as a house-cleaning enzyme that removes non-canonical purine nucleotides from the nucleotide pool, thus preventing their incorporation into DNA/RNA and avoiding chromosomal lesions. This Chlamydia abortus (strain DSM 27085 / S26/3) (Chlamydophila abortus) protein is dITP/XTP pyrophosphatase.